Consider the following 392-residue polypeptide: Phosphoglycerate kinase (392 aa).

Residues 19 to 21 (DYN), Arg-34, 57 to 60 (HLGR), Arg-116, and Arg-149 contribute to the substrate site. Residues Lys-199, Glu-321, and 347 to 350 (GGDS) contribute to the ATP site.

Belongs to the phosphoglycerate kinase family. Monomer.

The protein resides in the cytoplasm. It carries out the reaction (2R)-3-phosphoglycerate + ATP = (2R)-3-phospho-glyceroyl phosphate + ADP. Its pathway is carbohydrate degradation; glycolysis; pyruvate from D-glyceraldehyde 3-phosphate: step 2/5. This is Phosphoglycerate kinase from Thermomicrobium roseum (strain ATCC 27502 / DSM 5159 / P-2).